The chain runs to 208 residues: MSNLQEQLIALGGVFQAAVLVDRIARTGQASEANIGCMLGSLLVRDPKDTLEVFGGDDLNLRDGYRALIGALERDPNSLQREPLRYALSMLGLERQLNKRGDLLDTIGNRLPQIQSQAEHFGLVHENVIASSGALYQDTLSTLRQRIQVHGDMRFLQQPNNASKIRALLLAGIRAARLWRQLGGHRWQLVFSRRKLLNELYDMMRSPN.

It belongs to the HflD family.

The protein resides in the cytoplasm. It localises to the cell inner membrane. In Pseudomonas putida (strain ATCC 700007 / DSM 6899 / JCM 31910 / BCRC 17059 / LMG 24140 / F1), this protein is High frequency lysogenization protein HflD homolog.